The sequence spans 537 residues: Tyrosine-protein kinase Fyn (537 aa).

A lipid anchor (N-myristoyl glycine) is attached at G2. S-palmitoyl cysteine attachment occurs at residues C3 and C6. A disordered region spans residues 14-35 (LTEERDGSLNQSSGYRYGTDPT). Residues S21 and S26 each carry the phosphoserine modification. The region spanning 82–143 (TGVTLFVALY…PSNYVAPVDS (62 aa)) is the SH3 domain. Positions 149–246 (WYFGKLGRKD…GLCCRLVVPC (98 aa)) constitute an SH2 domain. Y185 carries the post-translational modification Phosphotyrosine. A Protein kinase domain is found at 271-524 (LQLIKRLGNG…YLQGFLEDYF (254 aa)). ATP contacts are provided by residues 277–285 (LGNGQFGEV) and K299. D390 acts as the Proton acceptor in catalysis. Y420 bears the Phosphotyrosine; by autocatalysis mark. Y531 bears the Phosphotyrosine mark.

It belongs to the protein kinase superfamily. Tyr protein kinase family. SRC subfamily. Interacts (via its SH3 domain) with PIK3R1 and PRMT8. Interacts with FYB1, PAG1, and SH2D1A. Interacts with CD79A (tyrosine-phosphorylated form); the interaction increases FYN activity. Interacts (via SH2 domain) with CSF1R (tyrosine phosphorylated). Interacts with TOM1L1 (phosphorylated form). Interacts with KDR (tyrosine phosphorylated). Interacts (via SH3 domain) with KLHL2 (via N-terminus). Interacts with SH2D1A and SLAMF1. Interacts with ITCH; the interaction phosphorylates ITCH and negatively regulates its activity. Interacts with FASLG. Interacts with RUNX3. Interacts with KIT. Interacts with EPHA8; possible downstream effector of EPHA8 in regulation of cell adhesion. Interacts with PTK2/FAK1; this interaction leads to PTK2/FAK1 phosphorylation and activation. Interacts with CAV1; this interaction couples integrins to the Ras-ERK pathway. Interacts with UNC119. Interacts (via SH2 domain) with PTPRH (phosphorylated form). Interacts with PTPRO (phosphorylated form). Interacts with PTPRB (phosphorylated form). Interacts with FYB2. Interacts with DSCAM. Interacts with SKAP1 and FYB1; this interaction promotes the phosphorylation of CLNK. Interacts with NEDD9; in the presence of PTK2. The cofactor is Mn(2+). Autophosphorylated at Tyr-420. Phosphorylation on the C-terminal tail at Tyr-531 by CSK maintains the enzyme in an inactive state. PTPRC/CD45 dephosphorylates Tyr-531 leading to activation. Dephosphorylation at Tyr-420 by PTPN2 negatively regulates T-cell receptor signaling. Phosphorylated at tyrosine residues, which can be enhanced by NTN1. In terms of processing, palmitoylated. Palmitoylation at Cys-3 and Cys-6, probably by ZDHHC21, regulates subcellular location. In terms of tissue distribution, detected in spinal cord oligodendrocytes (at protein level).

The protein resides in the cytoplasm. It localises to the nucleus. The protein localises to the cell membrane. Its subcellular location is the perikaryon. It carries out the reaction L-tyrosyl-[protein] + ATP = O-phospho-L-tyrosyl-[protein] + ADP + H(+). Its activity is regulated as follows. Inhibited by phosphorylation of Tyr-531 by leukocyte common antigen and activated by dephosphorylation of this site. Its function is as follows. Non-receptor tyrosine-protein kinase that plays a role in many biological processes including regulation of cell growth and survival, cell adhesion, integrin-mediated signaling, cytoskeletal remodeling, cell motility, immune response and axon guidance. Inactive FYN is phosphorylated on its C-terminal tail within the catalytic domain. Following activation by PKA, the protein subsequently associates with PTK2/FAK1, allowing PTK2/FAK1 phosphorylation, activation and targeting to focal adhesions. Involved in the regulation of cell adhesion and motility through phosphorylation of CTNNB1 (beta-catenin) and CTNND1 (delta-catenin). Regulates cytoskeletal remodeling by phosphorylating several proteins including the actin regulator WAS and the microtubule-associated proteins MAP2 and MAPT. Promotes cell survival by phosphorylating AGAP2/PIKE-A and preventing its apoptotic cleavage. Participates in signal transduction pathways that regulate the integrity of the glomerular slit diaphragm (an essential part of the glomerular filter of the kidney) by phosphorylating several slit diaphragm components including NPHS1, KIRREL1 and TRPC6. Plays a role in neural processes by phosphorylating DPYSL2, a multifunctional adapter protein within the central nervous system, ARHGAP32, a regulator for Rho family GTPases implicated in various neural functions, and SNCA, a small pre-synaptic protein. Involved in reelin signaling by mediating phosphorylation of DAB1 following reelin (RELN)-binding to its receptor. Participates in the downstream signaling pathways that lead to T-cell differentiation and proliferation following T-cell receptor (TCR) stimulation. Phosphorylates PTK2B/PYK2 in response to T-cell receptor activation. Also participates in negative feedback regulation of TCR signaling through phosphorylation of PAG1, thereby promoting interaction between PAG1 and CSK and recruitment of CSK to lipid rafts. CSK maintains LCK and FYN in an inactive form. Promotes CD28-induced phosphorylation of VAV1. In mast cells, phosphorylates CLNK after activation of immunoglobulin epsilon receptor signaling. Can also promote CD244-mediated NK cell activation. The chain is Tyrosine-protein kinase Fyn from Rattus norvegicus (Rat).